Reading from the N-terminus, the 209-residue chain is Probable GTP-binding protein EngB (209 aa).

The EngB-type G domain maps to 22-198 (TPLEIAFVGR…NRTVGSWFDA (177 aa)). Positions 37 and 59 each coordinate Mg(2+).

The protein belongs to the TRAFAC class TrmE-Era-EngA-EngB-Septin-like GTPase superfamily. EngB GTPase family. Mg(2+) serves as cofactor.

Necessary for normal cell division and for the maintenance of normal septation. The chain is Probable GTP-binding protein EngB from Neisseria meningitidis serogroup C (strain 053442).